Here is a 467-residue protein sequence, read N- to C-terminus: UBX domain-containing protein 7 (467 aa).

An N-acetylalanine modification is found at Ala-2. One can recognise a UBA domain in the interval 2–54; the sequence is AAHGGSAASSALKGLIQQFTAITGASESVGKHMLEACNNNLEMAVTMFLDGGG. Residues 57–77 are disordered; that stretch reads EEPSTSSASVSTVRPHTEEEV. The span at 59–70 shows a compositional bias: polar residues; that stretch reads PSTSSASVSTVR. Glycyl lysine isopeptide (Lys-Gly) (interchain with G-Cter in SUMO2) cross-links involve residues Lys-84 and Lys-112. The interval 240 to 260 is disordered; that stretch reads GQLDGLSSSPPKKCARSESLI. Phosphoserine is present on residues Ser-256, Ser-258, Ser-263, and Ser-266. The ubiquitin-interacting motif (UIM) repeat unit spans residues 263-282; sequence SEDSQLEAAIRASLQETHFD. The tract at residues 281–364 is disordered; it reads FDSAQAKQDS…TATNHQGLPS (84 aa). The span at 330–344 shows a compositional bias: basic and acidic residues; it reads HKDLGHRKEENRRPL. Ser-373 is modified (phosphoserine). The 78-residue stretch at 386–463 folds into the UBX domain; sequence VNGPKAQLML…GLCPQETVFV (78 aa).

Interacts with neddylated CUL2, ubiquitinated HIF1A, and VCP/p97.

The protein resides in the nucleus. Ubiquitin-binding adapter that links a subset of NEDD8-associated cullin ring ligases (CRLs) to the segregase VCP/p97, to regulate turnover of their ubiquitination substrates. The protein is UBX domain-containing protein 7 (Ubxn7) of Mus musculus (Mouse).